A 45-amino-acid chain; its full sequence is Large ribosomal subunit protein bL34 (45 aa).

Residues Met-1–Arg-20 are compositionally biased toward basic residues. The tract at residues Met-1 to Ala-45 is disordered.

The protein belongs to the bacterial ribosomal protein bL34 family.

This Tropheryma whipplei (strain Twist) (Whipple's bacillus) protein is Large ribosomal subunit protein bL34.